A 329-amino-acid polypeptide reads, in one-letter code: MNENLNGILNVYKEAGWTSFDVVAKLRGILKTKKIGHGGTLDPSVTGVLPVAVGKSTRLLEYMEAAGKIYEGEVTIGFSTETEDADGEIVSKTPVERELTESEIDSVMKNFIGKIKQIPPMYSAVKINGKKLYEYARAGQTVDRPTREITIKSFVRTSPMMTDEAAGLVSFSFKVECSKGTYVRTLAVDLAEQLGYAGHMSKLQRTASNGLMIKDAVKLSEIEVAMEAGELSSLMYPAEYAVSDLPRVNLTADQFEMARVGKKFAEDDWVTDETTDSPVIKSNKSKFLLTDLSELTRDKFAAFYDDKLIAVYMKHPEKAGIWKPNKVLV.

Residue Asp-42 is the Nucleophile of the active site.

Belongs to the pseudouridine synthase TruB family. Type 1 subfamily.

It carries out the reaction uridine(55) in tRNA = pseudouridine(55) in tRNA. Functionally, responsible for synthesis of pseudouridine from uracil-55 in the psi GC loop of transfer RNAs. This Lactococcus lactis subsp. lactis (strain IL1403) (Streptococcus lactis) protein is tRNA pseudouridine synthase B.